The following is a 658-amino-acid chain: ATP-dependent RNA helicase MSS116, mitochondrial (658 aa).

The transit peptide at 1–35 (MFRVTGIATARAVALQPFRAPLGVIRRFGISATAS) directs the protein to the mitochondrion. The segment covering 40–79 (HGHDMQSRNGSRWDSRRQGDRRSSRWEGRGSDREDGERGS) has biased composition (basic and acidic residues). The disordered stretch occupies residues 40 to 104 (HGHDMQSRNG…DGAAREGFSL (65 aa)). Positions 126–154 (TLVEEGVLSNELYEMLQSRGFDKLTPVQQ) match the Q motif motif. The region spanning 158-343 (KPILQTEHDV…NSIMNHAKCL (186 aa)) is the Helicase ATP-binding domain. 171 to 178 (AKTGTGKT) lines the ATP pocket. Positions 284–287 (DEAD) match the DEAD box motif. The 157-residue stretch at 372–528 (NITASLYKIR…TFDAAAQELS (157 aa)) folds into the Helicase C-terminal domain.

This sequence belongs to the DEAD box helicase family. DDX18/HAS1 subfamily.

The protein localises to the mitochondrion matrix. It catalyses the reaction ATP + H2O = ADP + phosphate + H(+). In terms of biological role, ATP-dependent RNA helicase required for mitochondrial splicing of group I and II introns. Also required for efficient mitochondrial translation. The chain is ATP-dependent RNA helicase MSS116, mitochondrial (MSS116) from Eremothecium gossypii (strain ATCC 10895 / CBS 109.51 / FGSC 9923 / NRRL Y-1056) (Yeast).